The following is a 1091-amino-acid chain: Ubiquitin carboxyl-terminal hydrolase 36 (1091 aa).

Residues 115-152 (ANGHDNNGRKLSDHPNQNHNHANPNGHHANPNELPKPK) are disordered. The segment covering 128 to 146 (HPNQNHNHANPNGHHANPN) has biased composition (low complexity). In terms of domain architecture, USP spans 176–484 (SGMINAGNTC…NAYIMFYELD (309 aa)). Catalysis depends on cysteine 185, which acts as the Nucleophile. The active-site Proton acceptor is the histidine 443. Phosphoserine occurs at positions 518 and 522. Disordered stretches follow at residues 523-572 (PAKF…KSPL), 594-892 (PTAN…ELLK), 972-1007 (QRDLADDEENEMDRGRQRKVKSGSAKISNSTPGYNP), and 1068-1091 (LAAGGGFTRRQPTHSAQQQQQQQS). The span at 547–572 (TTIQFKPQHQPSHQQNGVQQSAKSPL) shows a compositional bias: polar residues. The segment covering 594-612 (PTANGNKSSSNHSNHKSVN) has biased composition (low complexity). Residues 643–652 (KMDDCMDSGK) are compositionally biased toward basic and acidic residues. Residues 653–667 (PKSPVKTPVKTPLKS) are compositionally biased toward low complexity. A phosphothreonine mark is found at threonine 659 and threonine 663. Serine 673 and serine 675 each carry phosphoserine. Basic and acidic residues predominate over residues 691–702 (RSSDSSDSEHEP). Residues 703–727 (TTSSVQLNGHSKTNGSLSNGSSKST) show a composition bias toward polar residues. Serine 749 is modified (phosphoserine). The segment covering 749-759 (SEDDDDDEDEP) has biased composition (acidic residues). The segment covering 769 to 780 (PQKQSQSQSRSG) has biased composition (low complexity). Pro residues predominate over residues 781-790 (PPSPKTPPSP). Serine 783 carries the phosphoserine modification. At threonine 786 the chain carries Phosphothreonine. Serine 789 is modified (phosphoserine). Positions 806-821 (DGDDDEDDDDDDDEVV) are enriched in acidic residues. Threonine 829 is subject to Phosphothreonine. 2 stretches are compositionally biased toward polar residues: residues 838–850 (FASSKTATDSPTT) and 863–886 (AIKTQQQPRAGNGYQSEATANGGT). Residue serine 847 is modified to Phosphoserine. Threonine 850 carries the post-translational modification Phosphothreonine.

Belongs to the peptidase C19 family. As to quaternary structure, interacts with atms/PAF1, but not with CycT.

It localises to the nucleus. The protein resides in the nucleolus. The catalysed reaction is Thiol-dependent hydrolysis of ester, thioester, amide, peptide and isopeptide bonds formed by the C-terminal Gly of ubiquitin (a 76-residue protein attached to proteins as an intracellular targeting signal).. Functionally, required for maintaining multiple types of adult stem cells, including male and female germline, epithelial follicle cell and intestinal stem cells. May function as a transcriptional repressor by continually deubiquiting histone H2B at the promoters of genes critical for cellular differentiation, thereby preventing histone H3 'Lys-4' trimethylation (H3K4). Controls selective autophagy activation by ubiquitinated proteins. The sequence is that of Ubiquitin carboxyl-terminal hydrolase 36 (Usp36) from Drosophila ananassae (Fruit fly).